We begin with the raw amino-acid sequence, 337 residues long: Cytoskeleton protein RodZ (337 aa).

At M1–G111 the chain is on the cytoplasmic side. An HTH cro/C1-type domain is found at L19–L71. The H-T-H motif DNA-binding region spans Q30–E49. Residues W112–W132 traverse the membrane as a helical; Signal-anchor for type II membrane protein segment. Topologically, residues W133–Q337 are periplasmic. Residues T145–N167 show a composition bias toward polar residues. A disordered region spans residues T145 to P237. Residues T168–Q207 are compositionally biased toward low complexity. Residues N208–V218 show a composition bias toward polar residues. Over residues D219–P237 the composition is skewed to low complexity.

This sequence belongs to the RodZ family.

The protein resides in the cell inner membrane. In terms of biological role, cytoskeletal protein that is involved in cell-shape control through regulation of the length of the long axis. The polypeptide is Cytoskeleton protein RodZ (Escherichia coli (strain 55989 / EAEC)).